The primary structure comprises 492 residues: Glycerol kinase (492 aa).

T11 provides a ligand contact to ADP. ATP is bound by residues T11 and T12. T11 contacts sn-glycerol 3-phosphate. K15 contacts ADP. Residues R79, E80, Y129, and D238 each contribute to the sn-glycerol 3-phosphate site. Residues R79, E80, Y129, D238, and Q239 each coordinate glycerol. Positions 260, 302, 403, and 407 each coordinate ADP. ATP is bound by residues T260, G302, and G403.

This sequence belongs to the FGGY kinase family.

It carries out the reaction glycerol + ATP = sn-glycerol 3-phosphate + ADP + H(+). Its pathway is polyol metabolism; glycerol degradation via glycerol kinase pathway; sn-glycerol 3-phosphate from glycerol: step 1/1. With respect to regulation, inhibited by fructose 1,6-bisphosphate (FBP). Functionally, key enzyme in the regulation of glycerol uptake and metabolism. Catalyzes the phosphorylation of glycerol to yield sn-glycerol 3-phosphate. The sequence is that of Glycerol kinase from Aquifex aeolicus (strain VF5).